The chain runs to 240 residues: Ribosomal RNA small subunit methyltransferase G (240 aa).

S-adenosyl-L-methionine is bound by residues glycine 80, phenylalanine 85, 103–105 (DSS), 131–132 (AE), and arginine 150.

It belongs to the methyltransferase superfamily. RNA methyltransferase RsmG family.

It localises to the cytoplasm. Its function is as follows. Specifically methylates the N7 position of a guanine in 16S rRNA. The chain is Ribosomal RNA small subunit methyltransferase G from Thermoanaerobacter pseudethanolicus (strain ATCC 33223 / 39E) (Clostridium thermohydrosulfuricum).